The primary structure comprises 188 residues: Achaete-scute homolog 5 (188 aa).

Residues alanine 80–valine 93 form a basic motif region. A bHLH domain is found at alanine 80–leucine 132. A helix-loop-helix motif region spans residues lysine 94–leucine 132. The segment at threonine 139 to leucine 188 is disordered. The segment covering glycine 142–alanine 153 has biased composition (pro residues). Positions serine 158 to alanine 168 are enriched in polar residues. The span at glutamate 169–leucine 181 shows a compositional bias: low complexity.

Interacts with transcription factor TCF3/E12. In terms of tissue distribution, expressed in teeth (at protein level).

The protein localises to the nucleus. In terms of biological role, transcription factor. Probably binds E-box motifs 5'-CANNTG-3' in complex with transcription factor TCF3/E12. Negatively modulates transcription of target genes such as CDH1/E-cadherin, perhaps by recruiting the PRC2 repressive complex to regulatory elements. Regulates ameloblast development and tooth germ growth, perhaps acting by positively modulating migration of inner enamel epithelium (IEE) cells. Plays a role in enamel formation. In Mus musculus (Mouse), this protein is Achaete-scute homolog 5.